Reading from the N-terminus, the 172-residue chain is Co-chaperone protein HscB homolog (172 aa).

The J domain occupies 2 to 69 (NHFELFNLPV…DSRAAYLLAL (68 aa)).

The protein belongs to the HscB family. As to quaternary structure, interacts with HscA and stimulates its ATPase activity.

In terms of biological role, co-chaperone involved in the maturation of iron-sulfur cluster-containing proteins. Seems to help targeting proteins to be folded toward HscA. In Acinetobacter baumannii (strain SDF), this protein is Co-chaperone protein HscB homolog.